We begin with the raw amino-acid sequence, 125 residues long: uncharacterized protein (125 aa).

It belongs to the asfivirus B125R family.

This is an uncharacterized protein from Ornithodoros (relapsing fever ticks).